The chain runs to 419 residues: Histidine--tRNA ligase (419 aa).

The protein belongs to the class-II aminoacyl-tRNA synthetase family. As to quaternary structure, homodimer.

The protein localises to the cytoplasm. The catalysed reaction is tRNA(His) + L-histidine + ATP = L-histidyl-tRNA(His) + AMP + diphosphate + H(+). This is Histidine--tRNA ligase from Caldicellulosiruptor saccharolyticus (strain ATCC 43494 / DSM 8903 / Tp8T 6331).